A 440-amino-acid chain; its full sequence is uncharacterized protein (440 aa).

This is an uncharacterized protein from Rickettsia prowazekii (strain Madrid E).